A 340-amino-acid polypeptide reads, in one-letter code: Cytosolic Fe-S cluster assembly factor NBP35 (340 aa).

Positions 1-41 are disordered; it reads MPSLVDPVANKTDEGNNRTDLKAPEPEHCPGTESEEAGKAD. Residues 11–30 show a composition bias toward basic and acidic residues; sequence KTDEGNNRTDLKAPEPEHCP. [4Fe-4S] cluster-binding residues include Cys29, Cys43, Cys46, and Cys52. Position 82–89 (82–89) interacts with ATP; that stretch reads GKGGVGKS. [4Fe-4S] cluster-binding residues include Cys255 and Cys258.

Belongs to the Mrp/NBP35 ATP-binding proteins family. NUBP1/NBP35 subfamily. Heterotetramer of 2 NBP35 and 2 CFD1 chains. It depends on [4Fe-4S] cluster as a cofactor.

It localises to the cytoplasm. The protein resides in the nucleus. Component of the cytosolic iron-sulfur (Fe/S) protein assembly (CIA) machinery. Required for maturation of extramitochondrial Fe-S proteins. The NBP35-CFD1 heterotetramer forms a Fe-S scaffold complex, mediating the de novo assembly of an Fe-S cluster and its transfer to target apoproteins. Required for biogenesis and export of both ribosomal subunits, which may reflect a role in assembly of the Fe/S clusters in RLI1, a protein which performs rRNA processing and ribosome export. The protein is Cytosolic Fe-S cluster assembly factor NBP35 of Yarrowia lipolytica (strain CLIB 122 / E 150) (Yeast).